The primary structure comprises 406 residues: DNA primase DnaG (406 aa).

In terms of domain architecture, Toprim spans 167–253 (DAVVIVEGRA…CVEDLSRRTV (87 aa)). The Mg(2+) site is built by Glu-173, Asp-215, and Asp-217. The segment at 259-309 (NKTPASAAAPIATTQSETAATDGSATPAPTPEPAPDTAPSPDSDGDDTEAA) is disordered. Positions 261 to 272 (TPASAAAPIATT) are enriched in low complexity. The segment covering 286–296 (APTPEPAPDTA) has biased composition (pro residues).

This sequence belongs to the archaeal DnaG primase family. As to quaternary structure, forms a ternary complex with MCM helicase and DNA. It depends on Mg(2+) as a cofactor.

The enzyme catalyses ssDNA + n NTP = ssDNA/pppN(pN)n-1 hybrid + (n-1) diphosphate.. In terms of biological role, RNA polymerase that catalyzes the synthesis of short RNA molecules used as primers for DNA polymerase during DNA replication. The polypeptide is DNA primase DnaG (Halobacterium salinarum (strain ATCC 29341 / DSM 671 / R1)).